The following is a 370-amino-acid chain: Putative FBD-associated F-box protein At1g50980 (370 aa).

One can recognise an F-box domain in the interval 31 to 77 (IRTISEFPDKVLLKILSLLPSKDVVATGVLSKRWRSLWKDVKTFRTS). Residues 292 to 343 (LMGNQPDLIPKSLSSHLEILEWRQYNDTAQEREAAKYILANASGLRKATFYT) form the FBD domain.

In Arabidopsis thaliana (Mouse-ear cress), this protein is Putative FBD-associated F-box protein At1g50980.